Reading from the N-terminus, the 985-residue chain is Regulator of telomere elongation helicase 1 homolog (985 aa).

In terms of domain architecture, Helicase ATP-binding spans 7–303; it reads AGIPVHFPFE…QDMGGDEPKD (297 aa). 42 to 49 provides a ligand contact to ATP; it reads SPTGTGKT. 4 residues coordinate [4Fe-4S] cluster: Cys-146, Cys-164, Cys-173, and Cys-209. The DEAH box motif lies at 252-255; that stretch reads DEAH. The segment at 858 to 884 is disordered; sequence GSSGMVKIHKRERSSPTQPESSSQVSK. Positions 872–882 are enriched in polar residues; it reads SPTQPESSSQV. Thr-874 bears the Phosphothreonine mark.

Belongs to the helicase family. RAD3/XPD subfamily.

The protein resides in the nucleus. The catalysed reaction is ATP + H2O = ADP + phosphate + H(+). Its function is as follows. A probable ATP-dependent DNA helicase implicated in DNA repair and the maintenance of genomic stability. Acts as an anti-recombinase to counteract toxic recombination and limit crossover during meiosis. Regulates meiotic recombination and crossover homeostasis by physically dissociating strand invasion events and thereby promotes noncrossover repair by meiotic synthesis dependent strand annealing (SDSA) as well as disassembly of D loop recombination intermediates. The polypeptide is Regulator of telomere elongation helicase 1 homolog (Drosophila yakuba (Fruit fly)).